The sequence spans 189 residues: Putative 3-methyladenine DNA glycosylase (189 aa).

The protein belongs to the DNA glycosylase MPG family.

The chain is Putative 3-methyladenine DNA glycosylase (mag) from Corynebacterium glutamicum (strain ATCC 13032 / DSM 20300 / JCM 1318 / BCRC 11384 / CCUG 27702 / LMG 3730 / NBRC 12168 / NCIMB 10025 / NRRL B-2784 / 534).